The chain runs to 690 residues: Glycine--tRNA ligase beta subunit (690 aa).

It belongs to the class-II aminoacyl-tRNA synthetase family. In terms of assembly, tetramer of two alpha and two beta subunits.

The protein resides in the cytoplasm. It carries out the reaction tRNA(Gly) + glycine + ATP = glycyl-tRNA(Gly) + AMP + diphosphate. This is Glycine--tRNA ligase beta subunit from Desulfitobacterium hafniense (strain DSM 10664 / DCB-2).